A 430-amino-acid chain; its full sequence is 4-hydroxy-3-methylbut-2-en-1-yl diphosphate synthase (flavodoxin) (430 aa).

4 residues coordinate [4Fe-4S] cluster: Cys310, Cys313, Cys356, and Glu363.

This sequence belongs to the IspG family. [4Fe-4S] cluster is required as a cofactor.

It carries out the reaction (2E)-4-hydroxy-3-methylbut-2-enyl diphosphate + oxidized [flavodoxin] + H2O + 2 H(+) = 2-C-methyl-D-erythritol 2,4-cyclic diphosphate + reduced [flavodoxin]. It participates in isoprenoid biosynthesis; isopentenyl diphosphate biosynthesis via DXP pathway; isopentenyl diphosphate from 1-deoxy-D-xylulose 5-phosphate: step 5/6. Its function is as follows. Converts 2C-methyl-D-erythritol 2,4-cyclodiphosphate (ME-2,4cPP) into 1-hydroxy-2-methyl-2-(E)-butenyl 4-diphosphate. The sequence is that of 4-hydroxy-3-methylbut-2-en-1-yl diphosphate synthase (flavodoxin) from Nitrobacter winogradskyi (strain ATCC 25391 / DSM 10237 / CIP 104748 / NCIMB 11846 / Nb-255).